Here is a 124-residue protein sequence, read N- to C-terminus: Small ribosomal subunit protein uS12 (124 aa).

D89 bears the 3-methylthioaspartic acid mark.

This sequence belongs to the universal ribosomal protein uS12 family. Part of the 30S ribosomal subunit. Contacts proteins S8 and S17. May interact with IF1 in the 30S initiation complex.

Functionally, with S4 and S5 plays an important role in translational accuracy. Interacts with and stabilizes bases of the 16S rRNA that are involved in tRNA selection in the A site and with the mRNA backbone. Located at the interface of the 30S and 50S subunits, it traverses the body of the 30S subunit contacting proteins on the other side and probably holding the rRNA structure together. The combined cluster of proteins S8, S12 and S17 appears to hold together the shoulder and platform of the 30S subunit. This Photobacterium profundum (strain SS9) protein is Small ribosomal subunit protein uS12.